We begin with the raw amino-acid sequence, 1710 residues long: Ankyrin repeat domain-containing protein 26 (1710 aa).

Residues 1-41 (MKKIFSKKGESPLGSFARRQRSSAGGGGEPGEGAYSQPGYH) are disordered. Ser-11 and Ser-15 each carry phosphoserine. ANK repeat units follow at residues 45–75 (RDLG…GLND), 79–108 (MNRT…QLNV), 112–141 (ENRT…DPNL), 145–174 (HGNT…NIEA), and 178–207 (DDLT…NVNA). Residues 222 to 274 (KEERIPKHSSQNSNSVDESSEDSLSRLSGKPGVDDSWPTSDDEDLNFDTKNVP) are disordered. A phosphoserine mark is found at Ser-241, Ser-261, Ser-489, and Ser-530. Residues 504-630 (DSVPNKAGGM…EKRTSKESVN (127 aa)) form a disordered region. Positions 529–566 (ASEEEQEREGSENNQPQVEEERKKHRNNEMEVSANIHD) form a coiled coil. The segment covering 569-580 (TDDAEDDDDDDG) has biased composition (acidic residues). Composition is skewed to basic and acidic residues over residues 586 to 602 (KSGE…ENKE) and 613 to 626 (KEVK…RTSK). Ser-631 is subject to Phosphoserine. Acidic residues predominate over residues 650 to 660 (DSSLSEIDEDE). A disordered region spans residues 650–698 (DSSLSEIDEDEGRPTKKTSNEKNKVKNQIQSMDDVDDLTQSSETASEDC). The segment covering 661 to 673 (GRPTKKTSNEKNK) has biased composition (basic and acidic residues). Coiled-coil stretches lie at residues 743–873 (KNHC…NARM), 905–1472 (EEEK…MVEL), 1517–1587 (NNFA…NTKL), and 1649–1674 (LSKM…LESG). Positions 892–912 (AQKKMNSENSHSHEEEKDLSH) are disordered.

In terms of assembly, interacts with TRIO. Interacts with GPS2. Interacts with CCDC85B. Interacts with HMMR.

Its function is as follows. Acts as a regulator of adipogenesis. Involved in the regulation of the feeding behavior. The chain is Ankyrin repeat domain-containing protein 26 from Homo sapiens (Human).